A 316-amino-acid chain; its full sequence is Biotin synthase (316 aa).

The 227-residue stretch at 42 to 268 (LCGESVDLCT…INPTAYIRMA (227 aa)) folds into the Radical SAM core domain. Residues Cys60, Cys64, and Cys67 each coordinate [4Fe-4S] cluster. 4 residues coordinate [2Fe-2S] cluster: Ser104, Cys136, Cys196, and Arg266.

It belongs to the radical SAM superfamily. Biotin synthase family. As to quaternary structure, homodimer. Requires [4Fe-4S] cluster as cofactor. [2Fe-2S] cluster is required as a cofactor.

The catalysed reaction is (4R,5S)-dethiobiotin + (sulfur carrier)-SH + 2 reduced [2Fe-2S]-[ferredoxin] + 2 S-adenosyl-L-methionine = (sulfur carrier)-H + biotin + 2 5'-deoxyadenosine + 2 L-methionine + 2 oxidized [2Fe-2S]-[ferredoxin]. It functions in the pathway cofactor biosynthesis; biotin biosynthesis; biotin from 7,8-diaminononanoate: step 2/2. Functionally, catalyzes the conversion of dethiobiotin (DTB) to biotin by the insertion of a sulfur atom into dethiobiotin via a radical-based mechanism. This Clostridium beijerinckii (strain ATCC 51743 / NCIMB 8052) (Clostridium acetobutylicum) protein is Biotin synthase.